Here is a 210-residue protein sequence, read N- to C-terminus: MTIGLVGRKVGMTRIFTEDGVSIPVTVIEVEANRVTQVKSVETDGYNAIQVTTGAKKASRVTKPEAGHFAKAGVEAGRGLWEFRLNNGETFTVGSELKVDLLADVKLVDVTGTSKGKGFAGTVKRWNFRTQDMTHGNSLSHRVPGSIGQNQTPGRVFKGKKMAGHMGAERVTTQNLELVRVDAERNLLLIKGAVPGATNGNVIVKPAVKA.

Glutamine 151 is modified (N5-methylglutamine).

The protein belongs to the universal ribosomal protein uL3 family. In terms of assembly, part of the 50S ribosomal subunit. Forms a cluster with proteins L14 and L19. In terms of processing, methylated by PrmB.

In terms of biological role, one of the primary rRNA binding proteins, it binds directly near the 3'-end of the 23S rRNA, where it nucleates assembly of the 50S subunit. The sequence is that of Large ribosomal subunit protein uL3 from Aeromonas hydrophila subsp. hydrophila (strain ATCC 7966 / DSM 30187 / BCRC 13018 / CCUG 14551 / JCM 1027 / KCTC 2358 / NCIMB 9240 / NCTC 8049).